A 396-amino-acid polypeptide reads, in one-letter code: Phosphoglycerate kinase (396 aa).

Residues 21–23 (DFN), arginine 36, 59–62 (HFDR), arginine 118, and arginine 151 contribute to the substrate site. ATP is bound by residues lysine 201, glutamate 323, and 353 to 356 (GGDT).

It belongs to the phosphoglycerate kinase family. In terms of assembly, monomer.

It localises to the cytoplasm. The catalysed reaction is (2R)-3-phosphoglycerate + ATP = (2R)-3-phospho-glyceroyl phosphate + ADP. It participates in carbohydrate degradation; glycolysis; pyruvate from D-glyceraldehyde 3-phosphate: step 2/5. In Caulobacter sp. (strain K31), this protein is Phosphoglycerate kinase.